The following is a 506-amino-acid chain: Anaerobic nitric oxide reductase transcription regulator NorR (506 aa).

Aspartate 57 carries the 4-aspartylphosphate modification. The Sigma-54 factor interaction domain occupies 187–416 (MIGLSPNMMQ…LEHAIHRAVV (230 aa)). ATP is bound by residues 215-222 (GETGTGKE) and 278-287 (ADNGTLFLDE). Positions 481–500 (WAACARALETDVANLHRLAK) form a DNA-binding region, H-T-H motif.

Its pathway is nitrogen metabolism; nitric oxide reduction. Functionally, required for the expression of anaerobic nitric oxide (NO) reductase, acts as a transcriptional activator for at least the norVW operon. Activation also requires sigma-54. This Citrobacter koseri (strain ATCC BAA-895 / CDC 4225-83 / SGSC4696) protein is Anaerobic nitric oxide reductase transcription regulator NorR.